A 562-amino-acid chain; its full sequence is SLAIN motif-containing protein-like (562 aa).

Disordered stretches follow at residues 292–313, 344–381, and 409–562; these read QDYASSSASVSRRSSSASLHSL, HRYSPSPLSSPRCQSPSAAESRATTSRIRPPRRSIQNH, and SLEA…DGCY. Composition is skewed to low complexity over residues 295 to 311 and 345 to 355; these read ASSSASVSRRSSSASLH and RYSPSPLSSPR. Polar residues-rich tracts occupy residues 356–370, 424–442, 465–531, and 539–553; these read CQSPSAAESRATTSR, QGPSSRLTRMQQPSTSTPP, VSTS…STVP, and SRRSLPSAKMNSTLG.

Belongs to the SLAIN motif-containing family.

This is SLAIN motif-containing protein-like from Xenopus laevis (African clawed frog).